Consider the following 298-residue polypeptide: (S)-ureidoglycine aminohydrolase (298 aa).

Positions 1–20 (MRSLYLIVFIVISLVKASKS) are cleaved as a signal peptide. Positions 222–288 (TMDFQPGEFL…ALGKTRSRYL (67 aa)) constitute a Cupin type-2 domain. Mn(2+) is bound by residues glutamate 235, histidine 237, histidine 241, and glutamine 275. Position 235 (glutamate 235) interacts with substrate. The substrate site is built by glutamine 275, tyrosine 287, and lysine 291.

Belongs to the UGHY family. In terms of assembly, homooctamer. Requires Mn(2+) as cofactor.

It is found in the endoplasmic reticulum. It carries out the reaction (S)-2-ureidoglycine + H2O = (S)-ureidoglycolate + NH4(+). In terms of biological role, involved in the catabolism of purine nucleotides. Can use (S)-2-ureidoglycine as substrate, but not allantoate. The sequential activity of AAH, UGLYAH and UAH allows a complete purine breakdown without the intermediate generation of urea. The chain is (S)-ureidoglycine aminohydrolase (UGLYAH) from Arabidopsis thaliana (Mouse-ear cress).